Consider the following 513-residue polypeptide: Bifunctional purine biosynthesis protein PurH (513 aa).

The region spanning 1 to 146 (MPRFALLSVS…KNHAHLTILT (146 aa)) is the MGS-like domain.

It belongs to the PurH family.

The enzyme catalyses (6R)-10-formyltetrahydrofolate + 5-amino-1-(5-phospho-beta-D-ribosyl)imidazole-4-carboxamide = 5-formamido-1-(5-phospho-D-ribosyl)imidazole-4-carboxamide + (6S)-5,6,7,8-tetrahydrofolate. The catalysed reaction is IMP + H2O = 5-formamido-1-(5-phospho-D-ribosyl)imidazole-4-carboxamide. It functions in the pathway purine metabolism; IMP biosynthesis via de novo pathway; 5-formamido-1-(5-phospho-D-ribosyl)imidazole-4-carboxamide from 5-amino-1-(5-phospho-D-ribosyl)imidazole-4-carboxamide (10-formyl THF route): step 1/1. It participates in purine metabolism; IMP biosynthesis via de novo pathway; IMP from 5-formamido-1-(5-phospho-D-ribosyl)imidazole-4-carboxamide: step 1/1. The chain is Bifunctional purine biosynthesis protein PurH from Synechococcus elongatus (strain ATCC 33912 / PCC 7942 / FACHB-805) (Anacystis nidulans R2).